A 533-amino-acid polypeptide reads, in one-letter code: Beta-1,2-xylosyltransferase RCN11 (533 aa).

Residues 1-23 (MMPVRTYHHHHHHNNSNNHRLRR) are Cytoplasmic-facing. Residues 24-44 (IIPRVLLAVFAIYAVSFAAYL) form a helical; Signal-anchor for type II membrane protein membrane-spanning segment. Residues 45-533 (LRHQSPHPHP…LSNILKGFGC (489 aa)) lie on the Lumenal side of the membrane. Positions 51 to 78 (HPHPHPAADPERDAVDAAGGGGGGGAVD) are disordered. A compositionally biased stretch (basic and acidic residues) spans 56–65 (PAADPERDAV). Residues N307 and N313 are each glycosylated (N-linked (GlcNAc...) asparagine).

The protein belongs to the glycosyltransferase 61 family. Expressed at the base of the crown roots and in the basal region of the shoot, which contains the shoot and axillary meristems.

It localises to the golgi apparatus membrane. It functions in the pathway glycan metabolism. In terms of biological role, glycosyltransferase involved in the xylosylation of N-glycans. Possesses beta-1,2-xylosyltransferase activity, transferring xylose from UDP-xylose to the core beta-linked mannose of N-glycans. Beta-1,2-linked xylose residues on N-glycans are critical for seed germination and plant development and growth under conditions of abiotic stress. The protein is Beta-1,2-xylosyltransferase RCN11 of Oryza sativa subsp. japonica (Rice).